The chain runs to 295 residues: MALRQCAIYGKGGIGKSTTTQNLVSALAEMGKKVMIIGCDPKADSTRLILHAKAQNTIMEMAAEVGSVEDLELEDVLQIGYGGVRCAESGGPEPGVGCAGRGVITAINFLEEEGAYEEDLDFVFYDVLGDVVCGGFAMPIRENKAQEIYIVCSGEMMAMYAANNISKGIVKYAKSGSVRLAGLICNSRQTDREDELIIALADKLGTQMIHFVPRDNIVQRAEIRRMTVIEYDPTCKQANEYRTLANKVVNNKLFVVPTPVTMDELEELLMEFGIMDVEDETIIGKTAAEEAAATA.

10-17 (GKGGIGKS) is an ATP binding site. A [4Fe-4S] cluster-binding site is contributed by C98. An ADP-ribosylarginine; by dinitrogenase reductase ADP-ribosyltransferase modification is found at R101. C133 is a binding site for [4Fe-4S] cluster.

The protein belongs to the NifH/BchL/ChlL family. As to quaternary structure, homodimer. It depends on [4Fe-4S] cluster as a cofactor. The reversible ADP-ribosylation of Arg-101 inactivates the nitrogenase reductase and regulates nitrogenase activity.

It carries out the reaction N2 + 8 reduced [2Fe-2S]-[ferredoxin] + 16 ATP + 16 H2O = H2 + 8 oxidized [2Fe-2S]-[ferredoxin] + 2 NH4(+) + 16 ADP + 16 phosphate + 6 H(+). In terms of biological role, the key enzymatic reactions in nitrogen fixation are catalyzed by the nitrogenase complex, which has 2 components: the iron protein and the molybdenum-iron protein. In Tolumonas auensis (strain DSM 9187 / NBRC 110442 / TA 4), this protein is Nitrogenase iron protein.